The chain runs to 138 residues: Small ribosomal subunit protein uS11c (138 aa).

The disordered stretch occupies residues 1 to 22 (MAKPIPKIGSRKNARSGSRKHL). Basic residues predominate over residues 9-22 (GSRKNARSGSRKHL).

This sequence belongs to the universal ribosomal protein uS11 family. In terms of assembly, part of the 30S ribosomal subunit.

It localises to the plastid. The protein resides in the chloroplast. The chain is Small ribosomal subunit protein uS11c from Lotus japonicus (Lotus corniculatus var. japonicus).